The primary structure comprises 68 residues: Large ribosomal subunit protein uL29c (68 aa).

It belongs to the universal ribosomal protein uL29 family.

The protein localises to the plastid. It localises to the chloroplast. The chain is Large ribosomal subunit protein uL29c from Pyropia yezoensis (Susabi-nori).